The primary structure comprises 166 residues: Glutamyl-tRNA(Gln) amidotransferase subunit C, mitochondrial (166 aa).

A mitochondrion-targeting transit peptide spans 1–44 (MIRGWTIFTLCKPSALVGSSHFNKQFNWAKSQLQFATKVPQQPY).

It belongs to the GatC family. In terms of assembly, subunit of the heterotrimeric GatCAB amidotransferase (AdT) complex, composed of A, B and C subunits.

The protein resides in the mitochondrion. The enzyme catalyses L-glutamyl-tRNA(Gln) + L-glutamine + ATP + H2O = L-glutaminyl-tRNA(Gln) + L-glutamate + ADP + phosphate + H(+). Functionally, allows the formation of correctly charged Gln-tRNA(Gln) through the transamidation of misacylated Glu-tRNA(Gln) in the mitochondria. The reaction takes place in the presence of glutamine and ATP through an activated gamma-phospho-Glu-tRNA(Gln). This chain is Glutamyl-tRNA(Gln) amidotransferase subunit C, mitochondrial, found in Anopheles darlingi (Mosquito).